The sequence spans 1213 residues: tRNA wybutosine-synthesizing protein 4 (1213 aa).

2 stretches are compositionally biased toward low complexity: residues 1-13 (METT…PATT) and 39-52 (ATTT…TTPT). A disordered region spans residues 1 to 76 (METTEEVVAP…DDQVMGTNNS (76 aa)). A compositionally biased stretch (basic and acidic residues) spans 53–67 (HNEHASAKDPRKAQD). Arg117, Gly148, and Asp180 together coordinate S-adenosyl-L-methionine. Low complexity predominate over residues 215–248 (STPAATTTAAATTTTTTELKTTAATASSTSTEAP). The tract at residues 215-272 (STPAATTTAAATTTTTTELKTTAATASSTSTEAPQKPKKSPKPKDKSKAARAPAPTTA) is disordered. S-adenosyl-L-methionine is bound by residues 289 to 290 (DL) and Glu318. A disordered region spans residues 879 to 900 (EPRSLPLRNQAPNGAEGNANGS). Residues 1006–1166 (PTEKPAVLSD…YAAGKDVYGN (161 aa)) form the JmjC domain.

This sequence belongs to the methyltransferase superfamily. LCMT family.

The catalysed reaction is 7-[(3S)-3-amino-3-carboxypropyl]wyosine(37) in tRNA(Phe) + S-adenosyl-L-methionine = 7-[(3S)-(3-amino-3-methoxycarbonyl)propyl]wyosine(37) in tRNA(Phe) + S-adenosyl-L-homocysteine. It carries out the reaction 7-[(3S)-(3-amino-3-methoxycarbonyl)propyl]wyosine(37) in tRNA(Phe) + S-adenosyl-L-methionine + CO2 = wybutosine(37) in tRNA(Phe) + S-adenosyl-L-homocysteine + 2 H(+). The protein operates within tRNA modification; wybutosine-tRNA(Phe) biosynthesis. Probable S-adenosyl-L-methionine-dependent methyltransferase that acts as a component of the wybutosine biosynthesis pathway. Wybutosine is a hyper modified guanosine with a tricyclic base found at the 3'-position adjacent to the anticodon of eukaryotic phenylalanine tRNA. May methylate the carboxyl group of leucine residues to form alpha-leucine ester residues. This Neurospora crassa (strain ATCC 24698 / 74-OR23-1A / CBS 708.71 / DSM 1257 / FGSC 987) protein is tRNA wybutosine-synthesizing protein 4 (lcm-2).